The sequence spans 574 residues: Polyamine aminopropyltransferase (574 aa).

7 consecutive transmembrane segments (helical) span residues 22 to 42, 55 to 75, 90 to 110, 144 to 164, 188 to 208, 209 to 229, and 237 to 257; these read VLLL…EYLL, AAIY…AFAA, LTVA…IGFG, LPYF…PLIA, IGAG…DIQL, AAAL…WRFW, and LLLA…IQGP. The spermidine synthase stretch occupies residues 254–510; sequence IQGPSWEQQF…ATLDGKDAQH (257 aa). The PABS domain occupies 257–505; sequence PSWEQQFNNL…WGWSIATLDG (249 aa). Q281 contacts S-methyl-5'-thioadenosine. Spermidine-binding residues include H317 and D341. S-methyl-5'-thioadenosine is bound by residues D360 and 403–404; that span reads DA. The active-site Proton acceptor is the D424.

Belongs to the spermidine/spermine synthase family. As to quaternary structure, homodimer or homotetramer.

Its subcellular location is the cell membrane. The enzyme catalyses S-adenosyl 3-(methylsulfanyl)propylamine + putrescine = S-methyl-5'-thioadenosine + spermidine + H(+). The protein operates within amine and polyamine biosynthesis; spermidine biosynthesis; spermidine from putrescine: step 1/1. In terms of biological role, catalyzes the irreversible transfer of a propylamine group from the amino donor S-adenosylmethioninamine (decarboxy-AdoMet) to putrescine (1,4-diaminobutane) to yield spermidine. The protein is Polyamine aminopropyltransferase of Shewanella oneidensis (strain ATCC 700550 / JCM 31522 / CIP 106686 / LMG 19005 / NCIMB 14063 / MR-1).